The following is a 297-amino-acid chain: Acetaldehyde dehydrogenase (297 aa).

Residue 15-18 coordinates NAD(+); sequence SGSI. The active-site Acyl-thioester intermediate is C130. Residues 162–170 and N272 contribute to the NAD(+) site; that span reads SAGIATREN.

Belongs to the acetaldehyde dehydrogenase family.

The enzyme catalyses acetaldehyde + NAD(+) + CoA = acetyl-CoA + NADH + H(+). This Burkholderia thailandensis (strain ATCC 700388 / DSM 13276 / CCUG 48851 / CIP 106301 / E264) protein is Acetaldehyde dehydrogenase (mhpF).